Consider the following 253-residue polypeptide: 3-deoxy-manno-octulosonate cytidylyltransferase (253 aa).

It belongs to the KdsB family.

It localises to the cytoplasm. It carries out the reaction 3-deoxy-alpha-D-manno-oct-2-ulosonate + CTP = CMP-3-deoxy-beta-D-manno-octulosonate + diphosphate. The protein operates within nucleotide-sugar biosynthesis; CMP-3-deoxy-D-manno-octulosonate biosynthesis; CMP-3-deoxy-D-manno-octulosonate from 3-deoxy-D-manno-octulosonate and CTP: step 1/1. Its pathway is bacterial outer membrane biogenesis; lipopolysaccharide biosynthesis. Its function is as follows. Activates KDO (a required 8-carbon sugar) for incorporation into bacterial lipopolysaccharide in Gram-negative bacteria. In Proteus mirabilis (strain HI4320), this protein is 3-deoxy-manno-octulosonate cytidylyltransferase.